A 418-amino-acid chain; its full sequence is Thyroid hormone receptor alpha-B (418 aa).

Residues 1–40 (MDQNLSGLDCLSEPDEKRWPDGKRKRKNSQCMGKSGMSGD) form a disordered region. The interval 1-60 (MDQNLSGLDCLSEPDEKRWPDGKRKRKNSQCMGKSGMSGDSLVSLPPAGYIPSYLDKDEP) is modulating. 2 NR C4-type zinc fingers span residues 61 to 81 (CVVC…CEGC) and 99 to 123 (CKYD…FKKC). Positions 61–128 (CVVCSDKATG…RFKKCIAVGM (68 aa)) form a DNA-binding region, nuclear receptor. The region spanning 171–415 (EEWELIRIVT…PPLFLEVFED (245 aa)) is the NR LBD domain.

It belongs to the nuclear hormone receptor family. NR1 subfamily. Binds to thyroid hormone receptor element (TRE) weakly as homodimers and monomers, but binds TRE with much higher affinity as heterodimers with retinoid X receptors. Can bind DNA as a heterodimer with either rxra or rxrg.

The protein localises to the nucleus. Functionally, high affinity receptor for triiodothyronine (T3). The chain is Thyroid hormone receptor alpha-B (thra-b) from Xenopus laevis (African clawed frog).